The chain runs to 460 residues: Bifunctional protein GlmU (460 aa).

Residues 1–232 are pyrophosphorylase; it reads MAISAALILA…PDEIMGVNDR (232 aa). Residues 9 to 12, Lys23, Gln75, and 80 to 81 each bind UDP-N-acetyl-alpha-D-glucosamine; these read LAAG and GT. Asp105 lines the Mg(2+) pocket. Residues Gly142, Glu157, Asn172, and Asn230 each coordinate UDP-N-acetyl-alpha-D-glucosamine. Asn230 is a Mg(2+) binding site. Residues 233–253 are linker; the sequence is VQLAHAARVLRQRVNLQLMLA. Positions 254–460 are N-acetyltransferase; that stretch reads GVTLIDPDQT…GWCLKKRDNG (207 aa). UDP-N-acetyl-alpha-D-glucosamine is bound by residues Arg336 and Lys354. His366 functions as the Proton acceptor in the catalytic mechanism. UDP-N-acetyl-alpha-D-glucosamine is bound by residues Tyr369 and Asn380. Residues 389-390, Ser408, Ala426, and Arg443 contribute to the acetyl-CoA site; that span reads NY.

This sequence in the N-terminal section; belongs to the N-acetylglucosamine-1-phosphate uridyltransferase family. In the C-terminal section; belongs to the transferase hexapeptide repeat family. Homotrimer. Mg(2+) serves as cofactor.

It localises to the cytoplasm. The catalysed reaction is alpha-D-glucosamine 1-phosphate + acetyl-CoA = N-acetyl-alpha-D-glucosamine 1-phosphate + CoA + H(+). It carries out the reaction N-acetyl-alpha-D-glucosamine 1-phosphate + UTP + H(+) = UDP-N-acetyl-alpha-D-glucosamine + diphosphate. The protein operates within nucleotide-sugar biosynthesis; UDP-N-acetyl-alpha-D-glucosamine biosynthesis; N-acetyl-alpha-D-glucosamine 1-phosphate from alpha-D-glucosamine 6-phosphate (route II): step 2/2. Its pathway is nucleotide-sugar biosynthesis; UDP-N-acetyl-alpha-D-glucosamine biosynthesis; UDP-N-acetyl-alpha-D-glucosamine from N-acetyl-alpha-D-glucosamine 1-phosphate: step 1/1. It participates in bacterial outer membrane biogenesis; LPS lipid A biosynthesis. In terms of biological role, catalyzes the last two sequential reactions in the de novo biosynthetic pathway for UDP-N-acetylglucosamine (UDP-GlcNAc). The C-terminal domain catalyzes the transfer of acetyl group from acetyl coenzyme A to glucosamine-1-phosphate (GlcN-1-P) to produce N-acetylglucosamine-1-phosphate (GlcNAc-1-P), which is converted into UDP-GlcNAc by the transfer of uridine 5-monophosphate (from uridine 5-triphosphate), a reaction catalyzed by the N-terminal domain. In Trichlorobacter lovleyi (strain ATCC BAA-1151 / DSM 17278 / SZ) (Geobacter lovleyi), this protein is Bifunctional protein GlmU.